The chain runs to 180 residues: Kappa-casein (180 aa).

The first 21 residues, 1–21, serve as a signal peptide directing secretion; it reads MMKHFLLVVNILAVTLPFLAA. O-linked (GalNAc...) threonine glycans are attached at residues Thr132, Thr142, Thr147, and Thr153. A Phosphoserine; alternate modification is found at Ser160. A glycan (O-linked (GalNAc...) serine; alternate) is linked at Ser160.

It belongs to the kappa-casein family. Mammary gland specific. Secreted in milk.

It localises to the secreted. Kappa-casein stabilizes micelle formation, preventing casein precipitation in milk. In Oryctolagus cuniculus (Rabbit), this protein is Kappa-casein (CSN3).